We begin with the raw amino-acid sequence, 121 residues long: Large ribosomal subunit protein uL24 (121 aa).

Belongs to the universal ribosomal protein uL24 family. As to quaternary structure, part of the 50S ribosomal subunit.

One of two assembly initiator proteins, it binds directly to the 5'-end of the 23S rRNA, where it nucleates assembly of the 50S subunit. Functionally, located at the polypeptide exit tunnel on the outside of the subunit. The protein is Large ribosomal subunit protein uL24 of Pyrococcus horikoshii (strain ATCC 700860 / DSM 12428 / JCM 9974 / NBRC 100139 / OT-3).